We begin with the raw amino-acid sequence, 435 residues long: Serine--tRNA ligase (435 aa).

237-239 (TAE) is an L-serine binding site. 268–270 (RSE) serves as a coordination point for ATP. Residue Glu-291 participates in L-serine binding. An ATP-binding site is contributed by 355–358 (EISS). Position 390 (Ser-390) interacts with L-serine.

It belongs to the class-II aminoacyl-tRNA synthetase family. Type-1 seryl-tRNA synthetase subfamily. Homodimer. The tRNA molecule binds across the dimer.

It is found in the cytoplasm. The catalysed reaction is tRNA(Ser) + L-serine + ATP = L-seryl-tRNA(Ser) + AMP + diphosphate + H(+). The enzyme catalyses tRNA(Sec) + L-serine + ATP = L-seryl-tRNA(Sec) + AMP + diphosphate + H(+). It participates in aminoacyl-tRNA biosynthesis; selenocysteinyl-tRNA(Sec) biosynthesis; L-seryl-tRNA(Sec) from L-serine and tRNA(Sec): step 1/1. In terms of biological role, catalyzes the attachment of serine to tRNA(Ser). Is also able to aminoacylate tRNA(Sec) with serine, to form the misacylated tRNA L-seryl-tRNA(Sec), which will be further converted into selenocysteinyl-tRNA(Sec). The polypeptide is Serine--tRNA ligase (Lactobacillus delbrueckii subsp. bulgaricus (strain ATCC BAA-365 / Lb-18)).